A 984-amino-acid polypeptide reads, in one-letter code: Rhoptry neck protein 4 (984 aa).

Positions 1–26 (MAIKNTLTGSGLLVLLTLACGTTVQS) are cleaved as a signal peptide. A disordered region spans residues 24–300 (VQSSPPTPAP…TPIPASKGIY (277 aa)). Polar residues-rich tracts occupy residues 66–85 (PQKTASQSSLAPTGDNNSKV) and 92–105 (SDTTPRSAEGTSES). N81 carries an N-linked (GlcNAc...) asparagine glycan. Residues 106–117 (PPVPQLGTPPRP) are compositionally biased toward pro residues. Residues 129–172 (QPPTAAPRTSRSVDTGSGSDASTEQQAGGQKVVTPIPASKGIYP) form repeat 1. The span at 135–156 (PRTSRSVDTGSGSDASTEQQAG) shows a compositional bias: polar residues. Residues 214–228 (TGRRRAKARNRKRHP) show a composition bias toward basic residues. Residues 242–285 (QPPTTASRPSNGEGESQPPTAAPRTSRSVDTGSGSDASTEQQAG) are compositionally biased toward polar residues. The stretch at 258–301 (QPPTAAPRTSRSVDTGSGSDASTEQQAGGQKVVTPIPASKGIYP) is repeat 2. N-linked (GlcNAc...) asparagine glycans are attached at residues N390 and N780. The interval 882 to 984 (GPTVSDESRR…EESTSKTSEL (103 aa)) is disordered. A compositionally biased stretch (basic residues) spans 892–901 (MIHPVRHRSR). Low complexity predominate over residues 902 to 914 (TAPSSEAASTAAE). N925 carries N-linked (GlcNAc...) asparagine glycosylation. A compositionally biased stretch (polar residues) spans 967 to 984 (LKQSDTLIEESTSKTSEL).

It localises to the secreted. Its subcellular location is the parasitophorous vacuole membrane. This chain is Rhoptry neck protein 4 (RON4), found in Toxoplasma gondii.